The chain runs to 371 residues: Queuine tRNA-ribosyltransferase (371 aa).

The active-site Proton acceptor is Asp-90. Substrate-binding positions include 90-94 (DSGGF), Asp-144, Gln-189, and Gly-215. The segment at 246–252 (GVGTPEN) is RNA binding. Asp-265 acts as the Nucleophile in catalysis. The RNA binding; important for wobble base 34 recognition stretch occupies residues 270–274 (TRNAR). Zn(2+)-binding residues include Cys-303, Cys-305, Cys-308, and His-334.

It belongs to the queuine tRNA-ribosyltransferase family. Homodimer. Within each dimer, one monomer is responsible for RNA recognition and catalysis, while the other monomer binds to the replacement base PreQ1. The cofactor is Zn(2+).

The catalysed reaction is 7-aminomethyl-7-carbaguanine + guanosine(34) in tRNA = 7-aminomethyl-7-carbaguanosine(34) in tRNA + guanine. Its pathway is tRNA modification; tRNA-queuosine biosynthesis. Functionally, catalyzes the base-exchange of a guanine (G) residue with the queuine precursor 7-aminomethyl-7-deazaguanine (PreQ1) at position 34 (anticodon wobble position) in tRNAs with GU(N) anticodons (tRNA-Asp, -Asn, -His and -Tyr). Catalysis occurs through a double-displacement mechanism. The nucleophile active site attacks the C1' of nucleotide 34 to detach the guanine base from the RNA, forming a covalent enzyme-RNA intermediate. The proton acceptor active site deprotonates the incoming PreQ1, allowing a nucleophilic attack on the C1' of the ribose to form the product. After dissociation, two additional enzymatic reactions on the tRNA convert PreQ1 to queuine (Q), resulting in the hypermodified nucleoside queuosine (7-(((4,5-cis-dihydroxy-2-cyclopenten-1-yl)amino)methyl)-7-deazaguanosine). This chain is Queuine tRNA-ribosyltransferase, found in Helicobacter pylori (strain HPAG1).